The chain runs to 338 residues: Nicotinate-nucleotide--dimethylbenzimidazole phosphoribosyltransferase (338 aa).

Glutamate 305 (proton acceptor) is an active-site residue.

Belongs to the CobT family.

It catalyses the reaction 5,6-dimethylbenzimidazole + nicotinate beta-D-ribonucleotide = alpha-ribazole 5'-phosphate + nicotinate + H(+). Its pathway is nucleoside biosynthesis; alpha-ribazole biosynthesis; alpha-ribazole from 5,6-dimethylbenzimidazole: step 1/2. Functionally, catalyzes the synthesis of alpha-ribazole-5'-phosphate from nicotinate mononucleotide (NAMN) and 5,6-dimethylbenzimidazole (DMB). The sequence is that of Nicotinate-nucleotide--dimethylbenzimidazole phosphoribosyltransferase from Rhizobium johnstonii (strain DSM 114642 / LMG 32736 / 3841) (Rhizobium leguminosarum bv. viciae).